We begin with the raw amino-acid sequence, 740 residues long: Ribosomal protein S6 kinase alpha-6 (740 aa).

A Protein kinase 1 domain is found at 67 to 326 (FELLKVLGQG…VEEIKRHTFF (260 aa)). Residues 73 to 81 (LGQGSFGKV) and lysine 99 contribute to the ATP site. Catalysis depends on aspartate 192, which acts as the Proton acceptor. An AGC-kinase C-terminal domain is found at 327-396 (STIDWNKLYR…VAPVSLEESK (70 aa)). The 258-residue stretch at 420 to 677 (YELKEDIGVG…AEQVLKHSWI (258 aa)) folds into the Protein kinase 2 domain. Residues 426 to 434 (IGVGSYSIC) and lysine 449 each bind ATP. Catalysis depends on aspartate 537, which acts as the Proton acceptor.

This sequence belongs to the protein kinase superfamily. AGC Ser/Thr protein kinase family. S6 kinase subfamily. As to quaternary structure, forms a complex with either ERK1 or ERK2 in quiescent cells. Transiently dissociates following mitogenic stimulation. It depends on Mg(2+) as a cofactor.

The catalysed reaction is L-seryl-[protein] + ATP = O-phospho-L-seryl-[protein] + ADP + H(+). It carries out the reaction L-threonyl-[protein] + ATP = O-phospho-L-threonyl-[protein] + ADP + H(+). Activated by multiple phosphorylations on threonine and serine residues. In terms of biological role, serine/threonine kinase that may play a role in mediating the growth-factor and stress induced activation of the transcription factor CREB. This chain is Ribosomal protein S6 kinase alpha-6 (rps6ka6), found in Danio rerio (Zebrafish).